Consider the following 743-residue polypeptide: DEAD-box ATP-dependent RNA helicase 3B, chloroplastic (743 aa).

The transit peptide at 1–37 (MASLTLPALALALSNPGAVRLRAAAFRCWALRRRGWA) directs the protein to the chloroplast. Residues 60-79 (GSDDEDGEGPYGSDADEGFE) are disordered. Residues 61 to 79 (SDDEDGEGPYGSDADEGFE) are compositionally biased toward acidic residues. The Q motif signature appears at 88–116 (LAIARLGLPDELVATLEKRGITHLFPIQR). In terms of domain architecture, Helicase ATP-binding spans 119–295 (LIPALEGRDL…RRYLNNPLTI (177 aa)). 132–139 (AKTGTGKT) lines the ATP pocket. The short motif at 243–246 (DEAD) is the DEAD box element. The Helicase C-terminal domain maps to 324 to 469 (VLSDLITVYA…ISPPSIEEVL (146 aa)). The disordered stretch occupies residues 606–719 (LTKISKLPAL…RSSSFGGRES (114 aa)). Residues 642–653 (GGGASRGRGGWD) are compositionally biased toward gly residues. Residues 657-671 (EDRFRRGGRSLRSDN) are compositionally biased toward basic and acidic residues. Residues 688-719 (RSSSFGSRSSSYSSRGSPSFGGRSSSFGGRES) are compositionally biased toward low complexity. The CCHC-type zinc-finger motif lies at 725-742 (GACFNCGESGHRATDCPN).

Belongs to the DEAD box helicase family. DDX21/DDX50 subfamily.

The protein localises to the plastid. The protein resides in the chloroplast stroma. The enzyme catalyses ATP + H2O = ADP + phosphate + H(+). In terms of biological role, nuclear genome-encoded factor involved in ribosome biogenesis in chloroplasts. Binds specific group II introns in chloroplasts and facilitates their splicing. Is required for rRNA maturation in plastids and may contribute to the assembly of the large (50S) ribosomal subunit. Required for normal development of chloroplasts. The sequence is that of DEAD-box ATP-dependent RNA helicase 3B, chloroplastic from Zea mays (Maize).